The primary structure comprises 288 residues: Undecaprenyl-diphosphatase (288 aa).

The next 8 membrane-spanning stretches (helical) occupy residues 11–31 (LDLWQAIVLGFVQGATEFLPI), 49–69 (PGVAFTAVIQLGSIVAVLSYF), 94–114 (AQMGLGILFGTIPILIGGLLI), 129–149 (LAAIAIVSIVMGLLLGIAEQL), 159–179 (LRLADGLWMGFAQALALIPGV), 199–219 (AARFSFLLGIPAITIAGLVEL), 234–254 (VLAIGTLSSLIFSWLAIAWLL), and 265–285 (FVVYRIIFGGVILTAIATGTL).

It belongs to the UppP family.

It localises to the cell inner membrane. The enzyme catalyses di-trans,octa-cis-undecaprenyl diphosphate + H2O = di-trans,octa-cis-undecaprenyl phosphate + phosphate + H(+). In terms of biological role, catalyzes the dephosphorylation of undecaprenyl diphosphate (UPP). Confers resistance to bacitracin. This is Undecaprenyl-diphosphatase from Synechococcus elongatus (strain ATCC 33912 / PCC 7942 / FACHB-805) (Anacystis nidulans R2).